The primary structure comprises 295 residues: Cytidine deaminase (295 aa).

CMP/dCMP-type deaminase domains are found at residues 48-168 and 187-295; these read TDSE…FGPA and KETD…YVAA. 89 to 91 contributes to the substrate binding site; that stretch reads NME. Residue His-102 coordinates Zn(2+). Glu-104 (proton donor) is an active-site residue. Positions 129 and 132 each coordinate Zn(2+).

Belongs to the cytidine and deoxycytidylate deaminase family. As to quaternary structure, homodimer. Requires Zn(2+) as cofactor.

It catalyses the reaction cytidine + H2O + H(+) = uridine + NH4(+). The enzyme catalyses 2'-deoxycytidine + H2O + H(+) = 2'-deoxyuridine + NH4(+). In terms of biological role, this enzyme scavenges exogenous and endogenous cytidine and 2'-deoxycytidine for UMP synthesis. This Photobacterium profundum (strain SS9) protein is Cytidine deaminase.